Consider the following 141-residue polypeptide: Large ribosomal subunit protein uL11 (141 aa).

Belongs to the universal ribosomal protein uL11 family. Part of the ribosomal stalk of the 50S ribosomal subunit. Interacts with L10 and the large rRNA to form the base of the stalk. L10 forms an elongated spine to which L12 dimers bind in a sequential fashion forming a multimeric L10(L12)X complex. Post-translationally, one or more lysine residues are methylated.

Its function is as follows. Forms part of the ribosomal stalk which helps the ribosome interact with GTP-bound translation factors. This chain is Large ribosomal subunit protein uL11, found in Phytoplasma australiense.